A 199-amino-acid polypeptide reads, in one-letter code: Small ribosomal subunit protein uS4 (199 aa).

The S4 RNA-binding domain maps to 91 to 151 (SRLDNLVYRF…EKSKNVKAIA (61 aa)).

The protein belongs to the universal ribosomal protein uS4 family. Part of the 30S ribosomal subunit. Contacts protein S5. The interaction surface between S4 and S5 is involved in control of translational fidelity.

Its function is as follows. One of the primary rRNA binding proteins, it binds directly to 16S rRNA where it nucleates assembly of the body of the 30S subunit. With S5 and S12 plays an important role in translational accuracy. This is Small ribosomal subunit protein uS4 from Exiguobacterium sp. (strain ATCC BAA-1283 / AT1b).